The following is a 159-amino-acid chain: ATP synthase subunit delta, mitochondrial (159 aa).

The transit peptide at 1–23 directs the protein to the mitochondrion; it reads MFRLSAARTLAKSVNTVVAKRTY.

Belongs to the ATPase epsilon chain family. In terms of assembly, F-type ATPases have 2 components, CF(1) - the catalytic core - and CF(0) - the membrane proton channel. CF(1) has five subunits: alpha(3), beta(3), gamma(1), delta(1), epsilon(1). CF(0) has three main subunits: a, b and c.

Its subcellular location is the mitochondrion. The protein localises to the mitochondrion inner membrane. Its function is as follows. Mitochondrial membrane ATP synthase (F(1)F(0) ATP synthase or Complex V) produces ATP from ADP in the presence of a proton gradient across the membrane which is generated by electron transport complexes of the respiratory chain. F-type ATPases consist of two structural domains, F(1) - containing the extramembraneous catalytic core, and F(0) - containing the membrane proton channel, linked together by a central stalk and a peripheral stalk. During catalysis, ATP turnover in the catalytic domain of F(1) is coupled via a rotary mechanism of the central stalk subunits to proton translocation. Part of the complex F(1) domain and of the central stalk which is part of the complex rotary element. Rotation of the central stalk against the surrounding alpha(3)beta(3) subunits leads to hydrolysis of ATP in three separate catalytic sites on the beta subunits. The sequence is that of ATP synthase subunit delta, mitochondrial (ATP16) from Kluyveromyces lactis (strain ATCC 8585 / CBS 2359 / DSM 70799 / NBRC 1267 / NRRL Y-1140 / WM37) (Yeast).